A 421-amino-acid polypeptide reads, in one-letter code: UDP-N-acetylglucosamine 1-carboxyvinyltransferase (421 aa).

22–23 (KN) serves as a coordination point for phosphoenolpyruvate. Arg-93 lines the UDP-N-acetyl-alpha-D-glucosamine pocket. Cys-117 (proton donor) is an active-site residue. Position 117 is a 2-(S-cysteinyl)pyruvic acid O-phosphothioketal (Cys-117). Residues 122 to 126 (RPVDL), Asp-308, and Ile-330 contribute to the UDP-N-acetyl-alpha-D-glucosamine site.

Belongs to the EPSP synthase family. MurA subfamily.

Its subcellular location is the cytoplasm. The catalysed reaction is phosphoenolpyruvate + UDP-N-acetyl-alpha-D-glucosamine = UDP-N-acetyl-3-O-(1-carboxyvinyl)-alpha-D-glucosamine + phosphate. It functions in the pathway cell wall biogenesis; peptidoglycan biosynthesis. In terms of biological role, cell wall formation. Adds enolpyruvyl to UDP-N-acetylglucosamine. The chain is UDP-N-acetylglucosamine 1-carboxyvinyltransferase from Pseudomonas syringae pv. tomato (strain ATCC BAA-871 / DC3000).